The sequence spans 91 residues: UPF0250 protein NMC1112 (91 aa).

The protein belongs to the UPF0250 family.

This is UPF0250 protein NMC1112 from Neisseria meningitidis serogroup C / serotype 2a (strain ATCC 700532 / DSM 15464 / FAM18).